A 1788-amino-acid polypeptide reads, in one-letter code: Protein TIC 214 (1788 aa).

A run of 6 helical transmembrane segments spans residues 25 to 45 (IINS…FSIG), 70 to 90 (IGFI…PLHL), 95 to 115 (PHTI…WNNH), 132 to 152 (LNIQ…HFIL), 180 to 200 (VGWL…LFWI), and 223 to 243 (IFSI…PSPL). 2 disordered regions span residues 248 to 297 (LKKT…EEKE) and 1482 to 1526 (DLEN…DFDR). Composition is skewed to basic and acidic residues over residues 253–277 (KREE…EKGT) and 1513–1526 (PLKK…DFDR).

The protein belongs to the TIC214 family. As to quaternary structure, part of the Tic complex.

It localises to the plastid. It is found in the chloroplast inner membrane. In terms of biological role, involved in protein precursor import into chloroplasts. May be part of an intermediate translocation complex acting as a protein-conducting channel at the inner envelope. In Ranunculus macranthus (Large buttercup), this protein is Protein TIC 214.